Consider the following 208-residue polypeptide: MARNINPKCRQCRREGEKLFLKGDKCFSDKCPIERRNYPPGQHGQRKTRLSDYAVQLREKQKIRRIYGLLENQFRNVYKRADRQKGITGENLLKLLESRLDNVAYNMGFGASRAEARQIIRHDCILLNGKKANIPSQLIGPGDQIEVAEHAKSYLRIKSSIELAKRRSIPSWLEVDFDNLKGLYKNKPDRSDLSSTINESLVVELYSK.

One can recognise an S4 RNA-binding domain in the interval 98-160 (SRLDNVAYNM…AKSYLRIKSS (63 aa)).

Belongs to the universal ribosomal protein uS4 family. As to quaternary structure, part of the 30S ribosomal subunit. Contacts protein S5. The interaction surface between S4 and S5 is involved in control of translational fidelity.

Functionally, one of the primary rRNA binding proteins, it binds directly to 16S rRNA where it nucleates assembly of the body of the 30S subunit. With S5 and S12 plays an important role in translational accuracy. In Nitrosomonas eutropha (strain DSM 101675 / C91 / Nm57), this protein is Small ribosomal subunit protein uS4.